A 228-amino-acid polypeptide reads, in one-letter code: Biosynthetic peptidoglycan transglycosylase (228 aa).

A helical transmembrane segment spans residues 8–28 (GVAALLALFLLYQLWIFGHIV).

Belongs to the glycosyltransferase 51 family.

It localises to the cell inner membrane. The catalysed reaction is [GlcNAc-(1-&gt;4)-Mur2Ac(oyl-L-Ala-gamma-D-Glu-L-Lys-D-Ala-D-Ala)](n)-di-trans,octa-cis-undecaprenyl diphosphate + beta-D-GlcNAc-(1-&gt;4)-Mur2Ac(oyl-L-Ala-gamma-D-Glu-L-Lys-D-Ala-D-Ala)-di-trans,octa-cis-undecaprenyl diphosphate = [GlcNAc-(1-&gt;4)-Mur2Ac(oyl-L-Ala-gamma-D-Glu-L-Lys-D-Ala-D-Ala)](n+1)-di-trans,octa-cis-undecaprenyl diphosphate + di-trans,octa-cis-undecaprenyl diphosphate + H(+). The protein operates within cell wall biogenesis; peptidoglycan biosynthesis. In terms of biological role, peptidoglycan polymerase that catalyzes glycan chain elongation from lipid-linked precursors. The protein is Biosynthetic peptidoglycan transglycosylase of Laribacter hongkongensis (strain HLHK9).